Consider the following 247-residue polypeptide: Carboxy-S-adenosyl-L-methionine synthase (247 aa).

S-adenosyl-L-methionine is bound by residues Tyr40, 65–67, 90–91, 122–123, Asn137, and Arg204; these read GSS, DN, and DI.

It belongs to the class I-like SAM-binding methyltransferase superfamily. Cx-SAM synthase family. Homodimer.

The catalysed reaction is prephenate + S-adenosyl-L-methionine = carboxy-S-adenosyl-L-methionine + 3-phenylpyruvate + H2O. Its function is as follows. Catalyzes the conversion of S-adenosyl-L-methionine (SAM) to carboxy-S-adenosyl-L-methionine (Cx-SAM). The polypeptide is Carboxy-S-adenosyl-L-methionine synthase (Pseudomonas fluorescens (strain ATCC BAA-477 / NRRL B-23932 / Pf-5)).